We begin with the raw amino-acid sequence, 154 residues long: Interleukin-2 (154 aa).

An N-terminal signal peptide occupies residues 1 to 20 (MYRMQLLSCIALSLALVTNS). T23 carries O-linked (GalNAc...) threonine glycosylation. A disulfide bridge connects residues C78 and C126.

It belongs to the IL-2 family.

The protein resides in the secreted. In terms of biological role, cytokine produced by activated CD4-positive helper T-cells and to a lesser extend activated CD8-positive T-cells and natural killer (NK) cells that plays pivotal roles in the immune response and tolerance. Binds to a receptor complex composed of either the high-affinity trimeric IL-2R (IL2RA/CD25, IL2RB/CD122 and IL2RG/CD132) or the low-affinity dimeric IL-2R (IL2RB and IL2RG). Interaction with the receptor leads to oligomerization and conformation changes in the IL-2R subunits resulting in downstream signaling starting with phosphorylation of JAK1 and JAK3. In turn, JAK1 and JAK3 phosphorylate the receptor to form a docking site leading to the phosphorylation of several substrates including STAT5. This process leads to activation of several pathways including STAT, phosphoinositide-3-kinase/PI3K and mitogen-activated protein kinase/MAPK pathways. Functions as a T-cell growth factor and can increase NK-cell cytolytic activity as well. Promotes strong proliferation of activated B-cells and subsequently immunoglobulin production. Plays a pivotal role in regulating the adaptive immune system by controlling the survival and proliferation of regulatory T-cells, which are required for the maintenance of immune tolerance. Moreover, participates in the differentiation and homeostasis of effector T-cell subsets, including Th1, Th2, Th17 as well as memory CD8-positive T-cells. The protein is Interleukin-2 (IL2) of Cercocebus atys (Sooty mangabey).